The sequence spans 179 residues: Large ribosomal subunit protein uL5 (179 aa).

It belongs to the universal ribosomal protein uL5 family. As to quaternary structure, part of the 50S ribosomal subunit; part of the 5S rRNA/L5/L18/L25 subcomplex. Contacts the 5S rRNA and the P site tRNA. Forms a bridge to the 30S subunit in the 70S ribosome.

Functionally, this is one of the proteins that bind and probably mediate the attachment of the 5S RNA into the large ribosomal subunit, where it forms part of the central protuberance. In the 70S ribosome it contacts protein S13 of the 30S subunit (bridge B1b), connecting the 2 subunits; this bridge is implicated in subunit movement. Contacts the P site tRNA; the 5S rRNA and some of its associated proteins might help stabilize positioning of ribosome-bound tRNAs. The chain is Large ribosomal subunit protein uL5 from Shewanella woodyi (strain ATCC 51908 / MS32).